The sequence spans 59 residues: UPF0434 protein Noc_2677 (59 aa).

The protein belongs to the UPF0434 family.

The protein is UPF0434 protein Noc_2677 of Nitrosococcus oceani (strain ATCC 19707 / BCRC 17464 / JCM 30415 / NCIMB 11848 / C-107).